We begin with the raw amino-acid sequence, 182 residues long: Adenine phosphoribosyltransferase (182 aa).

It belongs to the purine/pyrimidine phosphoribosyltransferase family. As to quaternary structure, homodimer.

Its subcellular location is the cytoplasm. The catalysed reaction is AMP + diphosphate = 5-phospho-alpha-D-ribose 1-diphosphate + adenine. The protein operates within purine metabolism; AMP biosynthesis via salvage pathway; AMP from adenine: step 1/1. Functionally, catalyzes a salvage reaction resulting in the formation of AMP, that is energically less costly than de novo synthesis. The sequence is that of Adenine phosphoribosyltransferase from Shewanella frigidimarina (strain NCIMB 400).